The sequence spans 340 residues: GTP 3',8-cyclase (340 aa).

Residues 8–227 (KLGRPIRDLR…TMIEQHFEID (220 aa)) form the Radical SAM core domain. A GTP-binding site is contributed by Arg17. [4Fe-4S] cluster contacts are provided by Cys24 and Cys28. Tyr30 contacts S-adenosyl-L-methionine. Cys31 serves as a coordination point for [4Fe-4S] cluster. Residue Arg71 participates in GTP binding. Gly75 provides a ligand contact to S-adenosyl-L-methionine. Thr102 lines the GTP pocket. An S-adenosyl-L-methionine-binding site is contributed by Ser126. Lys163 is a GTP binding site. Met197 serves as a coordination point for S-adenosyl-L-methionine. Residues Cys261 and Cys264 each contribute to the [4Fe-4S] cluster site. Position 266–268 (266–268 (RAR)) interacts with GTP. Cys278 serves as a coordination point for [4Fe-4S] cluster.

This sequence belongs to the radical SAM superfamily. MoaA family. In terms of assembly, monomer and homodimer. [4Fe-4S] cluster serves as cofactor.

It catalyses the reaction GTP + AH2 + S-adenosyl-L-methionine = (8S)-3',8-cyclo-7,8-dihydroguanosine 5'-triphosphate + 5'-deoxyadenosine + L-methionine + A + H(+). It functions in the pathway cofactor biosynthesis; molybdopterin biosynthesis. Catalyzes the cyclization of GTP to (8S)-3',8-cyclo-7,8-dihydroguanosine 5'-triphosphate. This chain is GTP 3',8-cyclase, found in Staphylococcus aureus (strain Mu3 / ATCC 700698).